The primary structure comprises 533 residues: DNA-directed RNA polymerase III subunit RPC3 (533 aa).

The interval Leu-162–Val-181 is disordered. Ser-194 is modified (phosphoserine). A disordered region spans residues Gly-197–Pro-228. A compositionally biased stretch (basic and acidic residues) spans Gly-211 to Ser-227.

The protein belongs to the eukaryotic RPC3/POLR3C RNA polymerase subunit family. Component of the RNA polymerase III complex consisting of 17 subunits: a ten-subunit horseshoe-shaped catalytic core composed of POLR3A/RPC1, POLR3B/RPC2, POLR1C/RPAC1, POLR1D/RPAC2, POLR3K/RPC10, POLR2E/RPABC1, POLR2F/RPABC2, POLR2H/RPABC3, POLR2K/RPABC4 and POLR2L/RPABC5; a mobile stalk composed of two subunits POLR3H/RPC8 and CRCP/RPC9, protruding from the core and functioning primarily in transcription initiation; and additional subunits homologous to general transcription factors of the RNA polymerase II machinery, POLR3C/RPC3-POLR3F/RPC6-POLR3G/RPC7 heterotrimer required for transcription initiation and POLR3D/RPC4-POLR3E/RPC5 heterodimer involved in both transcription initiation and termination. Directly interacts with POLR3G/RPC7 and POLR3GL. Directly interacts with POLR3F/RPC6. Interacts with GTF3C4. As part of the RNA polymerase III complex, interacts with PKP2.

The protein resides in the nucleus. In terms of biological role, DNA-dependent RNA polymerase catalyzes the transcription of DNA into RNA using the four ribonucleoside triphosphates as substrates. Specific peripheric component of RNA polymerase III (Pol III) which synthesizes small non-coding RNAs including 5S rRNA, snRNAs, tRNAs and miRNAs from at least 500 distinct genomic loci. Part of POLR3C/RPC3-POLR3F/RPC6-POLR3G/RPC7 heterotrimer, coordinates the dynamics of Pol III stalk and clamp modules during the transition from apo to elongation state. Pol III plays a key role in sensing and limiting infection by intracellular bacteria and DNA viruses. Acts as a nuclear and cytosolic DNA sensor involved in innate immune response. Can sense non-self dsDNA that serves as template for transcription into dsRNA. The non-self RNA polymerase III transcripts, such as Epstein-Barr virus-encoded RNAs (EBERs) induce type I interferon and NF-kappa-B through the RIG-I pathway. Preferentially binds single-stranded DNA (ssDNA) in a sequence-independent manner. This chain is DNA-directed RNA polymerase III subunit RPC3, found in Mus musculus (Mouse).